A 181-amino-acid chain; its full sequence is MGYPGKNTKQYSSPKRRFEKSRIESERVLAITYGLRNKREIWRATEVLRKHRSGAREVLAMTSSIGEAPKTIARRDELVGTLQRYGLLGPDAAMDNILSLKVEDILERRLQTIVYRKGLARSPKQARQLITHGHIAINGQRVSVPSYMVSIAEEAGIMYYATSSLGDEANGERQRIMNQRA.

Residues 108–180 enclose the S4 RNA-binding domain; the sequence is RRLQTIVYRK…GERQRIMNQR (73 aa).

It belongs to the universal ribosomal protein uS4 family. Part of the 30S ribosomal subunit. Contacts protein S5. The interaction surface between S4 and S5 is involved in control of translational fidelity.

In terms of biological role, one of the primary rRNA binding proteins, it binds directly to 16S rRNA where it nucleates assembly of the body of the 30S subunit. Functionally, with S5 and S12 plays an important role in translational accuracy. In Methanocorpusculum labreanum (strain ATCC 43576 / DSM 4855 / Z), this protein is Small ribosomal subunit protein uS4.